The following is a 283-amino-acid chain: Elongation factor Ts (283 aa).

An involved in Mg(2+) ion dislocation from EF-Tu region spans residues 80-83; that stretch reads TDFV.

It belongs to the EF-Ts family.

The protein resides in the cytoplasm. Its function is as follows. Associates with the EF-Tu.GDP complex and induces the exchange of GDP to GTP. It remains bound to the aminoacyl-tRNA.EF-Tu.GTP complex up to the GTP hydrolysis stage on the ribosome. This chain is Elongation factor Ts, found in Erwinia tasmaniensis (strain DSM 17950 / CFBP 7177 / CIP 109463 / NCPPB 4357 / Et1/99).